Consider the following 857-residue polypeptide: Trehalose transporter 1 (857 aa).

Disordered stretches follow at residues 1 to 28 (MSGR…KLKE) and 62 to 202 (DPFL…QKAT). The Cytoplasmic portion of the chain corresponds to 1 to 392 (MSGRDNRGAG…VYRPTTNPIY (392 aa)). At Ala9 the chain carries Phosphothreonine. The residue at position 12 (Gly12) is a Phosphoserine. The span at 69–81 (VSPQRHPQNTVRT) shows a compositional bias: polar residues. The span at 134-143 (EIREHRDRQQ) shows a compositional bias: basic and acidic residues. Over residues 171–181 (GNSNTNSNKAA) the composition is skewed to polar residues. Phosphoserine occurs at positions 248, 249, and 250. Disordered stretches follow at residues 249-269 (SSEE…HQSL) and 280-299 (VLQG…EHKR). Phosphoserine is present on residues Ser320 and Ser322. The tract at residues 327–346 (LTSRQHFQQQRSISTDSRKS) is disordered. The segment covering 330-341 (RQHFQQQRSIST) has biased composition (polar residues). Residues 393–413 (IWTQVLAALSVSLGSLVVGFV) traverse the membrane as a helical segment. Topologically, residues 414-440 (SAYTSPALVSMTDRNITSFEVTQDAGS) are extracellular. N-linked (GlcNAc...) asparagine glycosylation occurs at Asn428. The helical transmembrane segment at 441–461 (WVGGIMPLAGLAGGIAGGPLI) threads the bilayer. The Cytoplasmic segment spans residues 462–473 (EYLGRRNTILAT). Residues 474 to 494 (AVPFIVSSLLIACAVNVAMVL) traverse the membrane as a helical segment. The Extracellular segment spans residues 495-497 (CGR). A helical transmembrane segment spans residues 498–518 (FLAGFCVGIASLSLPVYLGET). Residues 519–528 (VQPEVRGTLG) lie on the Cytoplasmic side of the membrane. A helical membrane pass occupies residues 529–549 (LLPTAFGNIGILLCFVAGSFM). The N-linked (GlcNAc...) asparagine glycan is linked to Asn550. Residues 550 to 552 (NWS) are Extracellular-facing. The helical transmembrane segment at 553–573 (MLAFLGAALPVPFLILMFLIP) threads the bilayer. Residues 574–636 (ETPRWFVGRG…ELLKLNNLKP (63 aa)) lie on the Cytoplasmic side of the membrane. Residues 637–657 (LSISLGLMFFQQFSGINAVIF) form a helical membrane-spanning segment. The Extracellular segment spans residues 658-673 (YTVQIFKDAGSTIDGN). A helical membrane pass occupies residues 674–694 (LCTIIVGIVNFLATFIGIVLI). Topologically, residues 695 to 700 (DRAGRK) are cytoplasmic. A helical transmembrane segment spans residues 701 to 721 (ILLYVSDIAMVLTLFVLGGFF). Residues 722–740 (YCKTYGPDVSHLGWLPLTC) are Extracellular-facing. The chain crosses the membrane as a helical span at residues 741–761 (FVIYILGFSLGFGPIPWLMMG). Residues 762-767 (EILPAK) lie on the Cytoplasmic side of the membrane. Residues 768-788 (IRGSAASVATAFNWFCTFVVT) form a helical membrane-spanning segment. Residues 789 to 801 (KTFQDLTVAMGAH) are Extracellular-facing. The helical transmembrane segment at 802–822 (GAFWLFGAICFVGLFFVIIYV) threads the bilayer. The Cytoplasmic portion of the chain corresponds to 823-857 (PETQGKTLEDIERKMMGRVRRMSSVANIKPLSFNM). A phosphoserine mark is found at Ser845 and Ser846.

It belongs to the major facilitator superfamily. Sugar transporter (TC 2.A.1.1) family. Trehalose transporter subfamily. In terms of tissue distribution, expressed in perineurial glia of the outer layer of the nervous system that forms the blood brain barrier (at protein level). Expressed in the fat body (at protein level). As to expression, may be specifically expressed in perineurial glia (at protein level). May be specifically expressed in the fat body (at protein level).

It is found in the cell membrane. The protein resides in the vesicle. It catalyses the reaction alpha,alpha-trehalose(in) = alpha,alpha-trehalose(out). It carries out the reaction D-glucose(out) = D-glucose(in). Low-capacity facilitative transporter for trehalose. Can also transport glucose. Does not transport maltose, sucrose, lactose or fructose. Mediates the bidirectional transfer of trehalose. Responsible for the transport of trehalose synthesized in the fat body and the incorporation of trehalose into other tissues that require a carbon source, thereby regulating trehalose levels in the hemolymph. Required in glial cells of the blood brain barrier to fuel glycolysis but not required in neurons. Neurons rely on the citric acid cycle for their energy needs and utilise alanine and lactate, by-products of glial cell glycolysis released into the hemolymph, as fuel. Increased expression in glial cells of the blood brain barrier during starvation and increased cell surface localization enhances carbohydrate uptake to protect the central nervous system from restricted nutrient availability. This is Trehalose transporter 1 from Drosophila melanogaster (Fruit fly).